A 221-amino-acid chain; its full sequence is CDC5 pindle pole body anchor protein 1 (221 aa).

A disordered region spans residues 142 to 221 (KNIERDNLKP…PTEDSVPHAE (80 aa)). Phosphoserine is present on residues S158, S170, and S175. The CDC5-binding signature appears at 165-170 (PLVTSS). The segment covering 166 to 188 (LVTSSPIHMSPLQSRQRPVSSLQ) has biased composition (polar residues). Positions 189-195 (PPKGPNF) match the CLB3-docking motif. Positions 200–202 (PKL) match the CDC14-binding motif.

In terms of assembly, interacts with CDC5 and CDC14. Phosphorylated by CLB3-CDK1 in metaphase which is required for correct localization at the nuclear envelop and the spindle pole body, and dephosphorylated by CDC14 in early anaphase.

It localises to the nucleus membrane. The protein localises to the cytoplasm. It is found in the cytoskeleton. Its subcellular location is the microtubule organizing center. The protein resides in the spindle pole body. Specialized component of the nuclear membrane that may be involved in the connection of the spindle pole body (SPB) to the nuclear envelope. Recruits CDC5 to spindle pole bodies in metaphase. In Saccharomyces cerevisiae (strain ATCC 204508 / S288c) (Baker's yeast), this protein is CDC5 pindle pole body anchor protein 1.